The sequence spans 186 residues: Translation initiation factor IF-3 (186 aa).

A disordered region spans residues 1–20; it reads MINRNSGKDRDRSRSGDKEL.

Belongs to the IF-3 family. As to quaternary structure, monomer.

Its subcellular location is the cytoplasm. IF-3 binds to the 30S ribosomal subunit and shifts the equilibrium between 70S ribosomes and their 50S and 30S subunits in favor of the free subunits, thus enhancing the availability of 30S subunits on which protein synthesis initiation begins. This is Translation initiation factor IF-3 from Borrelia duttonii (strain Ly).